Consider the following 313-residue polypeptide: MGLQRKSLLGLKDMEKSEIESILDSTESMKEIVQRKNKKLPTLKGFSMVNLFYEPSTRTRSSFEMAGKYLGADTTNMSASASSVAKGENLIDTGKTLEAMGINLIVMRHPLAGAPRLLANNLSCSIINAGDGYHEHPTQALLDMFTIKEYKGSLKGLKVTIIGDIYHSRVARSNIWGLTKMGADVRLAGPPTLLDQRVFTEMGASCYYRVEDALADADVVMALRIQRERQGKTLLPSLREYARLYGINQERFKLAKKDALLLHPGPVNRGIELTSELMNSEKSVIEEQVTNGVAIRMALLYHLSGGEDNGDIA.

Positions 58 and 59 each coordinate carbamoyl phosphate. Position 86 (K86) interacts with L-aspartate. 3 residues coordinate carbamoyl phosphate: R108, H136, and Q139. L-aspartate is bound by residues R169 and R224. Residues G265 and P266 each contribute to the carbamoyl phosphate site.

It belongs to the aspartate/ornithine carbamoyltransferase superfamily. ATCase family. Heterododecamer (2C3:3R2) of six catalytic PyrB chains organized as two trimers (C3), and six regulatory PyrI chains organized as three dimers (R2).

It carries out the reaction carbamoyl phosphate + L-aspartate = N-carbamoyl-L-aspartate + phosphate + H(+). It participates in pyrimidine metabolism; UMP biosynthesis via de novo pathway; (S)-dihydroorotate from bicarbonate: step 2/3. Its function is as follows. Catalyzes the condensation of carbamoyl phosphate and aspartate to form carbamoyl aspartate and inorganic phosphate, the committed step in the de novo pyrimidine nucleotide biosynthesis pathway. The protein is Aspartate carbamoyltransferase catalytic subunit of Natranaerobius thermophilus (strain ATCC BAA-1301 / DSM 18059 / JW/NM-WN-LF).